A 631-amino-acid chain; its full sequence is Mu-like prophage FluMu protein gp42 (631 aa).

Helical transmembrane passes span 56–76 (LGNI…TMVG) and 385–405 (GLAD…PVYV). Residues 425-453 (IEDGRDKDKKTQKKNKPPRPKRGRGSVRS) are disordered. Residues 434–449 (KTQKKNKPPRPKRGRG) show a composition bias toward basic residues. Helical transmembrane passes span 455–475 (VAAV…VTTA), 495–515 (SKAV…TVLM), and 543–563 (ALIP…GWLG).

It to phage Mu protein gp42.

The protein resides in the cell membrane. The sequence is that of Mu-like prophage FluMu protein gp42 from Haemophilus influenzae (strain ATCC 51907 / DSM 11121 / KW20 / Rd).